Consider the following 302-residue polypeptide: Ornithine carbamoyltransferase (302 aa).

Carbamoyl phosphate contacts are provided by residues 52–55, glutamine 79, arginine 103, and 130–133; these read STRT and HPCQ. L-ornithine contacts are provided by residues asparagine 161, aspartate 222, and 226-227; that span reads SM. Residues 262 to 263 and arginine 290 contribute to the carbamoyl phosphate site; that span reads CL.

This sequence belongs to the aspartate/ornithine carbamoyltransferase superfamily. OTCase family.

It localises to the cytoplasm. It carries out the reaction carbamoyl phosphate + L-ornithine = L-citrulline + phosphate + H(+). Its pathway is amino-acid biosynthesis; L-arginine biosynthesis; L-arginine from L-ornithine and carbamoyl phosphate: step 1/3. Reversibly catalyzes the transfer of the carbamoyl group from carbamoyl phosphate (CP) to the N(epsilon) atom of ornithine (ORN) to produce L-citrulline. The protein is Ornithine carbamoyltransferase of Syntrophus aciditrophicus (strain SB).